The primary structure comprises 552 residues: MAAKEVKFSTDARTRMLRGVDILADAVKVTLGPKGRNVVIEKSFGAPRITKDGVTVAKEIELADKFENMGAQMVREVASKTADLAGDGTTTATVLAQAIVREGVKAVAAGLNPMDLKRGVDLAVAAVVADVKSRSRKVATNAEIAQVGTISANGEKEIGDMIAKAMEKVGNEGVITVEEAKGLDTELDVVEGMQFDRGYTSPYFVTNAEKMTVELDNPYILLHEKKLSGLQPLLPVLEQVVQSGRPLVIIAEDIEGEALATLVVNKLRGGLKVAAVKAPGFGDRRKAMLEDIAILTGGQVISEDLGIKLESVNLEMLGTSKRITITKEDTTIVDGSGDKGAIDARCKQIRAQVEETTSDYDREKLQERLAKLAGGVAVIKVGGGSEIEVKERKDRVDDALHATRAAVEEGIVPGGGVALLHAVKALEGLASGNADQEVGISIVRRALQAPVRQIAENAGHDGAVVAGKIGESKDLSFGFDAQTGIYTDMIKAGIIDPTKVVRTALQDAASVAGLLITTEAMIAERPKKDAGGMPGGDMGGMGGMGGMGGMDF.

Residues 30–33, Lys-51, 87–91, Gly-415, and Asp-496 each bind ATP; these read TLGP and DGTTT.

It belongs to the chaperonin (HSP60) family. Forms a cylinder of 14 subunits composed of two heptameric rings stacked back-to-back. Interacts with the co-chaperonin GroES.

Its subcellular location is the cytoplasm. The enzyme catalyses ATP + H2O + a folded polypeptide = ADP + phosphate + an unfolded polypeptide.. In terms of biological role, together with its co-chaperonin GroES, plays an essential role in assisting protein folding. The GroEL-GroES system forms a nano-cage that allows encapsulation of the non-native substrate proteins and provides a physical environment optimized to promote and accelerate protein folding. The chain is Chaperonin GroEL from Paramagnetospirillum magneticum (strain ATCC 700264 / AMB-1) (Magnetospirillum magneticum).